Here is a 401-residue protein sequence, read N- to C-terminus: MALIIQKFGGTSVANIDRIKKIAPIIKAEIAKNNQVIVVVSAMAGVTNQLVTLCNEVSSLNNISQFAEYDVALSSGEIVTASLLALALQEEDIKAQSFLAWQLPILTDNNHSKALVESITTDLLEKYLQLNTVPIIAGFQGTNKSNRLTTLGRGGSDTTAALIAAAMKAKRCDIYTDVEGIFTADPRIIPNAKKIKEIDFLEMLELASSGAKVLHPRAVELVMRYKIDMRVLSTFSPNTEGTLITSKDKNMENGIINSITSNKNLLKISVKSISLSFLQVANMITQNNNHIEFMQEIKNNEEYSFITNLTDENNLQALLTNLKNDKQIQDFTFDAEIATISLIGYGIKNDCKVLEMILSKLTKDNINVNMIQLSEVKITLLINDQDAEKTIFNLYNLFKIS.

This sequence belongs to the aspartokinase family.

The catalysed reaction is L-aspartate + ATP = 4-phospho-L-aspartate + ADP. It participates in amino-acid biosynthesis; L-lysine biosynthesis via DAP pathway; (S)-tetrahydrodipicolinate from L-aspartate: step 1/4. Its pathway is amino-acid biosynthesis; L-methionine biosynthesis via de novo pathway; L-homoserine from L-aspartate: step 1/3. The protein operates within amino-acid biosynthesis; L-threonine biosynthesis; L-threonine from L-aspartate: step 1/5. In Rickettsia felis (strain ATCC VR-1525 / URRWXCal2) (Rickettsia azadi), this protein is Aspartokinase (lysC).